The primary structure comprises 859 residues: Active breakpoint cluster region-related protein (859 aa).

Positions 26–84 (TDEYDGEGNEEQKGPPEGSETMPYIDESPTMSPQLSARSQGGGDGVSPTPPEGLAPGVE) are disordered. A compositionally biased stretch (polar residues) spans 54 to 64 (PTMSPQLSARS). Serine 57 carries the phosphoserine modification. In terms of domain architecture, DH spans 91–284 (MRKLVLSGFL…QNFLSSINED (194 aa)). The PH domain occupies 301–459 (QLVKDGFLVE…WREAIQKLQK (159 aa)). In terms of domain architecture, C2 spans 484–613 (TVHNIPVTSN…ETKNWHTDVI (130 aa)). In terms of domain architecture, Rho-GAP spans 647-845 (VKISVVTKRE…YYLQHPPISF (199 aa)).

In terms of assembly, interacts with DLG4. In terms of tissue distribution, highly enriched in the brain. Much weaker expression in heart, lung and muscle.

It is found in the cell projection. It localises to the dendritic spine. Its subcellular location is the axon. The protein resides in the synapse. In terms of biological role, protein with a unique structure having two opposing regulatory activities toward small GTP-binding proteins. The C-terminus is a GTPase-activating protein domain which stimulates GTP hydrolysis by RAC1, RAC2 and CDC42. Accelerates the intrinsic rate of GTP hydrolysis of RAC1 or CDC42, leading to down-regulation of the active GTP-bound form. The central Dbl homology (DH) domain functions as a guanine nucleotide exchange factor (GEF) that modulates the GTPases CDC42, RHOA and RAC1. Promotes the conversion of CDC42, RHOA and RAC1 from the GDP-bound to the GTP-bound form. Functions as an important negative regulator of neuronal RAC1 activity. Regulates macrophage functions such as CSF-1 directed motility and phagocytosis through the modulation of RAC1 activity. This is Active breakpoint cluster region-related protein from Homo sapiens (Human).